Reading from the N-terminus, the 500-residue chain is Cytochrome P450 6B4 (500 aa).

Heme is bound at residue cysteine 443.

The protein belongs to the cytochrome P450 family. Heme is required as a cofactor.

The protein resides in the endoplasmic reticulum membrane. Its subcellular location is the microsome membrane. The catalysed reaction is an organic molecule + reduced [NADPH--hemoprotein reductase] + O2 = an alcohol + oxidized [NADPH--hemoprotein reductase] + H2O + H(+). Enables the insect to feed on furanocoumarin-producing plants and evolved as an adaptation for detoxification of xanthotoxin and other furanocoumarins. This isozyme metabolizes isopimpinellin, imperatorin, and bergapten at high rates, xanthotoxin and psoralen at intermediate rates and angelicin, sphondin, and trioxsalen only at very low rates. This Papilio glaucus (Eastern tiger swallowtail butterfly) protein is Cytochrome P450 6B4 (CYP6B4).